Here is a 316-residue protein sequence, read N- to C-terminus: DNA-directed RNA polymerase III subunit RPC6 (316 aa).

Ala2 carries the post-translational modification N-acetylalanine. Glycyl lysine isopeptide (Lys-Gly) (interchain with G-Cter in SUMO2) cross-links involve residues Lys5 and Lys7. Residues Cys287, Cys290, Cys296, and Cys307 each coordinate [4Fe-4S] cluster.

The protein belongs to the eukaryotic RPC34/RPC39 RNA polymerase subunit family. In terms of assembly, component of the RNA polymerase III complex consisting of 17 subunits: a ten-subunit horseshoe-shaped catalytic core composed of POLR3A/RPC1, POLR3B/RPC2, POLR1C/RPAC1, POLR1D/RPAC2, POLR3K/RPC10, POLR2E/RPABC1, POLR2F/RPABC2, POLR2H/RPABC3, POLR2K/RPABC4 and POLR2L/RPABC5; a mobile stalk composed of two subunits POLR3H/RPC8 and CRCP/RPC9, protruding from the core and functioning primarily in transcription initiation; and additional subunits homologous to general transcription factors of the RNA polymerase II machinery, POLR3C/RPC3-POLR3F/RPC6-POLR3G/RPC7 heterotrimer required for transcription initiation and POLR3D/RPC4-POLR3E/RPC5 heterodimer involved in both transcription initiation and termination. Directly interacts with POLR3C. Interacts with TBP and TFIIIB90 and GTF3C4. Interacts with MAF1. As part of the RNA polymerase III complex, interacts with PKP2.

It is found in the nucleus. In terms of biological role, DNA-dependent RNA polymerase catalyzes the transcription of DNA into RNA using the four ribonucleoside triphosphates as substrates. Specific peripheric component of RNA polymerase III (Pol III) which synthesizes small non-coding RNAs including 5S rRNA, snRNAs, tRNAs and miRNAs from at least 500 distinct genomic loci. Part of POLR3C/RPC3-POLR3F/RPC6-POLR3G/RPC7 heterotrimer that coordinates the dynamics of Pol III stalk and clamp modules during the transition from apo to elongation state. Pol III plays a key role in sensing and limiting infection by intracellular bacteria and DNA viruses, including varicella zoster virus. Acts as a nuclear and cytosolic DNA sensor detecting AT-rich DNA, involved in innate immune response. Can sense non-self dsDNA that serves as template for transcription into dsRNA. The non-self RNA polymerase III transcripts, such as Epstein-Barr virus-encoded RNAs (EBERs) induce type I interferon and NF-kappa-B through the RIG-I pathway. Preferentially binds double-stranded DNA (dsDNA). The sequence is that of DNA-directed RNA polymerase III subunit RPC6 (POLR3F) from Bos taurus (Bovine).